We begin with the raw amino-acid sequence, 311 residues long: Homeobox-leucine zipper protein HOX13 (311 aa).

Residues 1-74 (MKRPTSSSRK…PSCGLGEKKR (74 aa)) form a disordered region. The segment covering 35–54 (DEAEMEEVDEEEEEEVDEDM) has biased composition (acidic residues). Positions 69–128 (LGEKKRRLALEQVRALERSFDTDNKLDPDRKARIARDLGLQPRQVAVWFQNRRARWKTKQ) form a DNA-binding region, homeobox. A leucine-zipper region spans residues 127 to 171 (KQLERDFAALRARHDALRADCDALRRDKDALAAEIRELREKLPTK).

This sequence belongs to the HD-ZIP homeobox family. Class I subfamily. As to expression, expressed in seedlings, roots, stems, leaf sheaths and blades and panicles.

The protein localises to the nucleus. Probable transcription factor. The chain is Homeobox-leucine zipper protein HOX13 (HOX13) from Oryza sativa subsp. japonica (Rice).